Here is a 360-residue protein sequence, read N- to C-terminus: Photosystem II protein D1 2 (360 aa).

A run of 3 helical transmembrane segments spans residues 29–46 (YIGW…TAVT), 118–133 (HYMI…QWEY), and 142–156 (WICV…ATYS). His-118 is a binding site for chlorophyll a. Tyr-126 contacts pheophytin a. [CaMn4O5] cluster-binding residues include Asp-170 and Glu-189. The chain crosses the membrane as a helical span at residues 197–218 (FHMFGVAGVLGGSLFAAMHGSL). Position 198 (His-198) interacts with chlorophyll a. A quinone is bound by residues His-215 and 264-265 (SF). His-215 provides a ligand contact to Fe cation. His-272 contacts Fe cation. The chain crosses the membrane as a helical span at residues 274 to 288 (FLGAWPVVCIWLTAM). [CaMn4O5] cluster contacts are provided by His-332, Glu-333, Asp-342, and Ala-344. The propeptide occupies 345 to 360 (AGESAPVALTAPVING).

It belongs to the reaction center PufL/M/PsbA/D family. As to quaternary structure, PSII is composed of 1 copy each of membrane proteins PsbA, PsbB, PsbC, PsbD, PsbE, PsbF, PsbH, PsbI, PsbJ, PsbK, PsbL, PsbM, PsbT, PsbX, PsbY, PsbZ, Psb30/Ycf12, peripheral proteins PsbO, CyanoQ (PsbQ), PsbU, PsbV and a large number of cofactors. It forms dimeric complexes. It depends on The D1/D2 heterodimer binds P680, chlorophylls that are the primary electron donor of PSII, and subsequent electron acceptors. It shares a non-heme iron and each subunit binds pheophytin, quinone, additional chlorophylls, carotenoids and lipids. D1 provides most of the ligands for the Mn4-Ca-O5 cluster of the oxygen-evolving complex (OEC). There is also a Cl(-1) ion associated with D1 and D2, which is required for oxygen evolution. The PSII complex binds additional chlorophylls, carotenoids and specific lipids. as a cofactor. Tyr-161 forms a radical intermediate that is referred to as redox-active TyrZ, YZ or Y-Z. Post-translationally, C-terminally processed by CtpA; processing is essential to allow assembly of the oxygen-evolving complex and thus photosynthetic growth.

It is found in the cellular thylakoid membrane. It catalyses the reaction 2 a plastoquinone + 4 hnu + 2 H2O = 2 a plastoquinol + O2. Functionally, photosystem II (PSII) is a light-driven water:plastoquinone oxidoreductase that uses light energy to abstract electrons from H(2)O, generating O(2) and a proton gradient subsequently used for ATP formation. It consists of a core antenna complex that captures photons, and an electron transfer chain that converts photonic excitation into a charge separation. The D1/D2 (PsbA/PsbD) reaction center heterodimer binds P680, the primary electron donor of PSII as well as several subsequent electron acceptors. The sequence is that of Photosystem II protein D1 2 from Acaryochloris marina (strain MBIC 11017).